The sequence spans 284 residues: RNase adapter protein RapZ (284 aa).

8-15 serves as a coordination point for ATP; that stretch reads GRSGSGKS. 56-59 serves as a coordination point for GTP; sequence DVRN. The RNA-binding stretch occupies residues 266 to 284; the sequence is RSRGKNVQSRHRTLEKRKT.

Belongs to the RapZ-like family. RapZ subfamily. As to quaternary structure, homotrimer.

Functionally, modulates the synthesis of GlmS, by affecting the processing and stability of the regulatory small RNA GlmZ. When glucosamine-6-phosphate (GlcN6P) concentrations are high in the cell, RapZ binds GlmZ and targets it to cleavage by RNase E. Consequently, GlmZ is inactivated and unable to activate GlmS synthesis. Under low GlcN6P concentrations, RapZ is sequestered and inactivated by an other regulatory small RNA, GlmY, preventing GlmZ degradation and leading to synthesis of GlmS. This chain is RNase adapter protein RapZ, found in Salmonella arizonae (strain ATCC BAA-731 / CDC346-86 / RSK2980).